A 223-amino-acid polypeptide reads, in one-letter code: GRF1-interacting factor 3 (223 aa).

The interval 179-223 is disordered; it reads ANNAGPNDASGGGKPDGTNMSQSGADGQGGSAARHGGGDAKTEGK. Residues 214–223 are compositionally biased toward basic and acidic residues; that stretch reads GGGDAKTEGK.

Belongs to the SS18 family. Interacts with GRF1. Predominantly expressed in shoot tips containing the shoot apical meristem (SAM) and flower buds. Also expressed in mature flowers.

Its function is as follows. Transcription coactivator that plays a role in the regulation of cell expansion in leaf and cotyledons tissues. Component of a network formed by miR396, the GRFs and their interacting factors (GIFs) acting in the regulation of meristem function, at least partially through the control of cell proliferation. GIFs are involved in the positive regulation of cell proliferation of lateral organs in a functionally redundant manner. This Arabidopsis thaliana (Mouse-ear cress) protein is GRF1-interacting factor 3 (GIF3).